The primary structure comprises 703 residues: Calpain-8 (703 aa).

Residues 45 to 344 (LFKDPEFPAC…YSRLEICNLS (300 aa)) enclose the Calpain catalytic domain. Catalysis depends on residues Cys-105, His-262, and Asn-286. Positions 355–512 (KWNLVLFNGR…VFSEKKAKAL (158 aa)) are domain III. Positions 513–531 (EIGDTVSGHPHEPHPRDMD) are linker. EF-hand domains lie at 532-566 (EEDE…VLSK), 575-608 (FNIN…LKIR), 605-640 (LKIR…AGFT), and 670-703 (IRLE…CVLV). A domain IV region spans residues 532–703 (EEDEHVRSLF…LAEWLCCVLV (172 aa)). Positions 588, 590, 592, 594, 599, 618, 620, 624, and 629 each coordinate Ca(2+).

This sequence belongs to the peptidase C2 family. As to quaternary structure, monomer and homooligomer. Interacts with COPS1/GPS1, COPB1, EYA2, NME2, NME4 and TOMM70. Ca(2+) is required as a cofactor. Post-translationally, undergoes autolytic cleavage between Ala-5 and Ala-6 which gives rise to fragments extending from Ala-6 to the C-terminus, Ala-6 to the EF-hand 2 domain and from Ala-6 to the beginning of domain III. In terms of tissue distribution, predominantly expressed in the stomach. Localizes strictly to the surface mucus cells in the gastric epithelium and the mucus-secreting goblet cells in the duodenum. Detected in the pituitary after estrogen stimulation.

The protein localises to the cytoplasm. The protein resides in the golgi apparatus. It catalyses the reaction Broad endopeptidase specificity.. Calcium-regulated non-lysosomal thiol-protease. Involved in membrane trafficking in the gastric surface mucus cells (pit cells) and may involve the membrane trafficking of mucus cells via interactions with coat protein. Proteolytically cleaves the beta-subunit of coatomer complex. This chain is Calpain-8 (Capn8), found in Rattus norvegicus (Rat).